The primary structure comprises 109 residues: Putative membrane protein insertion efficiency factor (109 aa).

Belongs to the UPF0161 family.

The protein resides in the cell inner membrane. Functionally, could be involved in insertion of integral membrane proteins into the membrane. The protein is Putative membrane protein insertion efficiency factor of Rhodopseudomonas palustris (strain BisB18).